The sequence spans 63 residues: Sperm protamine P1 (63 aa).

A disordered region spans residues Met1–Arg47.

The protein belongs to the protamine P1 family. Testis.

The protein localises to the nucleus. Its subcellular location is the chromosome. Functionally, protamines substitute for histones in the chromatin of sperm during the haploid phase of spermatogenesis. They compact sperm DNA into a highly condensed, stable and inactive complex. The chain is Sperm protamine P1 (PRM1) from Planigale tenuirostris (Narrow-nosed planigale).